The sequence spans 120 residues: Chaperonin GroEL (120 aa).

Position 23–27 (23–27 (DGTTT)) interacts with ATP.

This sequence belongs to the chaperonin (HSP60) family. Forms a cylinder of 14 subunits composed of two heptameric rings stacked back-to-back. Interacts with the co-chaperonin GroES.

It localises to the cytoplasm. It carries out the reaction ATP + H2O + a folded polypeptide = ADP + phosphate + an unfolded polypeptide.. Functionally, together with its co-chaperonin GroES, plays an essential role in assisting protein folding. The GroEL-GroES system forms a nano-cage that allows encapsulation of the non-native substrate proteins and provides a physical environment optimized to promote and accelerate protein folding. The sequence is that of Chaperonin GroEL from Mycobacterium kansasii.